We begin with the raw amino-acid sequence, 276 residues long: NH(3)-dependent NAD(+) synthetase (276 aa).

ATP is bound at residue 43–50 (GISGGVDS). D49 is a Mg(2+) binding site. R146 lines the deamido-NAD(+) pocket. T166 contacts ATP. Residue E171 coordinates Mg(2+). Deamido-NAD(+) is bound by residues K179 and D186. ATP-binding residues include K195 and T217. A deamido-NAD(+)-binding site is contributed by 266 to 267 (HK).

This sequence belongs to the NAD synthetase family. As to quaternary structure, homodimer.

The enzyme catalyses deamido-NAD(+) + NH4(+) + ATP = AMP + diphosphate + NAD(+) + H(+). The protein operates within cofactor biosynthesis; NAD(+) biosynthesis; NAD(+) from deamido-NAD(+) (ammonia route): step 1/1. Catalyzes the ATP-dependent amidation of deamido-NAD to form NAD. Uses ammonia as a nitrogen source. The polypeptide is NH(3)-dependent NAD(+) synthetase (Aliivibrio salmonicida (strain LFI1238) (Vibrio salmonicida (strain LFI1238))).